The chain runs to 589 residues: Oligo-1,6-glucosidase IMA2 (589 aa).

D215 acts as the Nucleophile in catalysis. E277 serves as the catalytic Proton donor.

Belongs to the glycosyl hydrolase 13 family.

It carries out the reaction Hydrolysis of (1-&gt;6)-alpha-D-glucosidic linkages in some oligosaccharides produced from starch and glycogen by alpha-amylase, and in isomaltose.. Alpha-glucosidase with specificity for isomaltase, methyl-alpha-glucoside, and palatinose. This chain is Oligo-1,6-glucosidase IMA2 (IMA2), found in Saccharomyces cerevisiae (strain ATCC 204508 / S288c) (Baker's yeast).